A 251-amino-acid polypeptide reads, in one-letter code: Triosephosphate isomerase (251 aa).

A substrate-binding site is contributed by 9-11 (NWK). His-95 (electrophile) is an active-site residue. Catalysis depends on Glu-167, which acts as the Proton acceptor. Substrate-binding positions include Gly-173, Ser-212, and 233–234 (GG).

It belongs to the triosephosphate isomerase family. In terms of assembly, homodimer.

It localises to the cytoplasm. It carries out the reaction D-glyceraldehyde 3-phosphate = dihydroxyacetone phosphate. Its pathway is carbohydrate biosynthesis; gluconeogenesis. It functions in the pathway carbohydrate degradation; glycolysis; D-glyceraldehyde 3-phosphate from glycerone phosphate: step 1/1. Involved in the gluconeogenesis. Catalyzes stereospecifically the conversion of dihydroxyacetone phosphate (DHAP) to D-glyceraldehyde-3-phosphate (G3P). The polypeptide is Triosephosphate isomerase (Pseudomonas savastanoi pv. phaseolicola (strain 1448A / Race 6) (Pseudomonas syringae pv. phaseolicola (strain 1448A / Race 6))).